We begin with the raw amino-acid sequence, 428 residues long: Putative zinc metalloprotease LL2128 (428 aa).

Residue His-19 participates in Zn(2+) binding. The active site involves Glu-20. His-23 is a Zn(2+) binding site. 3 consecutive transmembrane segments (helical) span residues Gly-188–Val-210, Ile-354–Leu-376, and Ile-401–Leu-423. The PDZ domain occupies Gly-188–Lys-282.

This sequence belongs to the peptidase M50B family. The cofactor is Zn(2+).

The protein resides in the cell membrane. In Lactococcus lactis subsp. lactis (strain IL1403) (Streptococcus lactis), this protein is Putative zinc metalloprotease LL2128.